Reading from the N-terminus, the 365-residue chain is Chorismate synthase (365 aa).

Residue Arg-46 participates in NADP(+) binding. Residues Arg-124–Ser-126, Gly-284, Lys-299–Ser-303, and Arg-326 contribute to the FMN site.

This sequence belongs to the chorismate synthase family. FMNH2 is required as a cofactor.

It catalyses the reaction 5-O-(1-carboxyvinyl)-3-phosphoshikimate = chorismate + phosphate. Its pathway is metabolic intermediate biosynthesis; chorismate biosynthesis; chorismate from D-erythrose 4-phosphate and phosphoenolpyruvate: step 7/7. Its function is as follows. Catalyzes the anti-1,4-elimination of the C-3 phosphate and the C-6 proR hydrogen from 5-enolpyruvylshikimate-3-phosphate (EPSP) to yield chorismate, which is the branch point compound that serves as the starting substrate for the three terminal pathways of aromatic amino acid biosynthesis. This reaction introduces a second double bond into the aromatic ring system. In Pyrobaculum islandicum (strain DSM 4184 / JCM 9189 / GEO3), this protein is Chorismate synthase.